A 178-amino-acid polypeptide reads, in one-letter code: Probable chorismate pyruvate-lyase (178 aa).

Residues Met37, Arg78, Leu114, and Glu165 each coordinate substrate.

Belongs to the UbiC family.

It localises to the cytoplasm. It catalyses the reaction chorismate = 4-hydroxybenzoate + pyruvate. The protein operates within cofactor biosynthesis; ubiquinone biosynthesis. Removes the pyruvyl group from chorismate, with concomitant aromatization of the ring, to provide 4-hydroxybenzoate (4HB) for the ubiquinone pathway. This chain is Probable chorismate pyruvate-lyase, found in Aeromonas salmonicida (strain A449).